Consider the following 100-residue polypeptide: Small ribosomal subunit protein bS20 (100 aa).

Residues 1–20 show a composition bias toward basic residues; sequence MASGKPKKKNPRLASGRKRV. Positions 1–21 are disordered; that stretch reads MASGKPKKKNPRLASGRKRVR.

It belongs to the bacterial ribosomal protein bS20 family.

Functionally, binds directly to 16S ribosomal RNA. The protein is Small ribosomal subunit protein bS20 of Albidiferax ferrireducens (strain ATCC BAA-621 / DSM 15236 / T118) (Rhodoferax ferrireducens).